A 228-amino-acid chain; its full sequence is U1 small nuclear ribonucleoprotein C (228 aa).

The Matrin-type; degenerate zinc finger occupies 11 to 43 (ATVDYCDIFLTHDSASVRKAHNTGWKHKMQVEH). The tract at residues 83 to 127 (GQRGQPVGGPPRPPQPFHNGGRPGPPGRPPMGMFPPQRPMMPPPH) is disordered. The segment covering 105-127 (PGPPGRPPMGMFPPQRPMMPPPH) has biased composition (pro residues).

This sequence belongs to the U1 small nuclear ribonucleoprotein C family. U1 snRNP is composed of the 7 core Sm proteins B/B', D1, D2, D3, E, F and G that assemble in a heptameric protein ring on the Sm site of the small nuclear RNA to form the core snRNP, and at least 3 U1 snRNP-specific proteins U1-70K, U1-A and U1-C. U1-C interacts with U1 snRNA and the 5' splice-site region of the pre-mRNA.

It localises to the nucleus. Its function is as follows. Component of the spliceosomal U1 snRNP, which is essential for recognition of the pre-mRNA 5' splice-site and the subsequent assembly of the spliceosome. U1-C is directly involved in initial 5' splice-site recognition for both constitutive and regulated alternative splicing. The interaction with the 5' splice-site seems to precede base-pairing between the pre-mRNA and the U1 snRNA. Stimulates commitment or early (E) complex formation by stabilizing the base pairing of the 5' end of the U1 snRNA and the 5' splice-site region. This chain is U1 small nuclear ribonucleoprotein C, found in Batrachochytrium dendrobatidis (strain JAM81 / FGSC 10211) (Frog chytrid fungus).